The chain runs to 93 residues: Cell division topological specificity factor (93 aa).

The protein belongs to the MinE family.

In terms of biological role, prevents the cell division inhibition by proteins MinC and MinD at internal division sites while permitting inhibition at polar sites. This ensures cell division at the proper site by restricting the formation of a division septum at the midpoint of the long axis of the cell. This is Cell division topological specificity factor from Synechococcus sp. (strain WH7803).